Consider the following 350-residue polypeptide: Phenylalanine--tRNA ligase alpha subunit (350 aa).

Mg(2+) is bound at residue glutamate 262.

This sequence belongs to the class-II aminoacyl-tRNA synthetase family. Phe-tRNA synthetase alpha subunit type 1 subfamily. As to quaternary structure, tetramer of two alpha and two beta subunits. It depends on Mg(2+) as a cofactor.

The protein localises to the cytoplasm. The catalysed reaction is tRNA(Phe) + L-phenylalanine + ATP = L-phenylalanyl-tRNA(Phe) + AMP + diphosphate + H(+). The polypeptide is Phenylalanine--tRNA ligase alpha subunit (Thermus thermophilus (strain ATCC BAA-163 / DSM 7039 / HB27)).